Consider the following 314-residue polypeptide: MALEQLGLGVSAVDGGENSSAPSNDGGDDGVKTARLPRWTRQEILVLIQGKRVAENRVRRGRAAGMALGSGQMEPKWASVSSYCKRHGVNRGPVQCRKRWSNLAGDYKKIKEWESQIKEETESYWVMRNDVRREKKLPGFFDKEVYDIVDGGVIPPAVPVLSLGLAPASDEGLLSDLDRRESPEKLNSTPVAKSVTDVIDKEKQEACVADQGRVKEKQPEAANVEGGSTSQEERKRKRTSFGEKEEEEEEGETKKMQNQLIEILERNGQLLAAQLEVQNLNLKLDREQRKDHGDSLVAVLNKLADAVAKIADKM.

Residues methionine 1–alanine 34 form a disordered region. Residues arginine 38–alanine 104 enclose the Myb-like domain. The Nuclear localization signal signature appears at cysteine 84–arginine 91. Positions leucine 161–leucine 165 match the EAR 1 motif. Threonine 189 carries the phosphothreonine; by MAPK4 modification. Residues cysteine 207 to lysine 255 form a disordered region. Positions leucine 280–leucine 284 match the EAR 2 motif.

Homodimer. Interacts directly with MPK4. In terms of processing, phosphorylated on Thr-189 by MPK4 in response to microbe-associated molecular patterns (MAMPs, e.g. flg22, elf18, chitin, and LPS). This phosphorylation enhances DNA-binding and thus negatively regulates immune gene expression.

It is found in the nucleus. Functionally, transcriptional repressor that binds DNA and plays a negative role in regulating microbe-associated molecular patterns-(MAMPs, e.g. flg22, elf18, chitin, and LPS) triggered immunity (PTI) by negatively regulating immune gene expression. The protein is Trihelix transcription factor ASR3 of Arabidopsis thaliana (Mouse-ear cress).